The following is an 86-amino-acid chain: Collagen alpha-1(XII) chain (86 aa).

Pro residues predominate over residues 1–12 (NQPGPPGPPGPP). A disordered region spans residues 1 to 86 (NQPGPPGPPG…PGRPGDSGIR (86 aa)). Hydroxyproline is present on residues proline 6, proline 9, proline 12, proline 18, proline 24, proline 27, proline 30, proline 42, proline 51, proline 54, proline 65, proline 74, proline 77, and proline 80. Residues 16 to 25 (GEPGPGGRPG) show a composition bias toward gly residues. Positions 35-50 (PQGERGLPGEXGERGL) are enriched in low complexity. Positions 57–71 (QGESRTGPPGSTGSR) are enriched in low complexity.

The protein belongs to the fibril-associated collagens with interrupted helices (FACIT) family. In terms of assembly, trimer of identical chains each containing 190 kDa of non-triple-helical sequences. Post-translationally, the triple-helical tail is stabilized by disulfide bonds at each end. Prolines at the third position of the tripeptide repeating unit (G-X-Y) are hydroxylated in some or all of the chains.

It localises to the secreted. Its subcellular location is the extracellular space. It is found in the extracellular matrix. Type XII collagen interacts with type I collagen-containing fibrils, the COL1 domain could be associated with the surface of the fibrils, and the COL2 and NC3 domains may be localized in the perifibrillar matrix. In Bos taurus (Bovine), this protein is Collagen alpha-1(XII) chain (COL12A1).